We begin with the raw amino-acid sequence, 263 residues long: MSGEALDEIQWKSPEFIQERGLHTGNVLEYFSLSPFYDRTSNNQQLMMQFQFQQIQIPVNTTFQQFFQEKLREMTGVVFVIAYNREPDFWIIRKQLQLDPQNAVTLQDYYIIGANVYQAPKVYDVLSSRLLSSVLQLRNSIDLLNKMTQFHVSDGGHSYNNAIHQSTSNPTQGQSSGKSISATVGNTGTTATPMTMQTPQTVGPNGPATVQSGANSAAAISKNGSTSSAESADDRKNIYLDDIPLYGRGSTVEMLGLKVNLES.

Positions 163–181 (IHQSTSNPTQGQSSGKSIS) are enriched in polar residues. Residues 163-232 (IHQSTSNPTQ…NGSTSSAESA (70 aa)) are disordered. Residues 182–202 (ATVGNTGTTATPMTMQTPQTV) show a composition bias toward low complexity.

This sequence belongs to the Mediator complex subunit 6 family. Component of the Mediator complex.

It localises to the nucleus. Component of the Mediator complex, a coactivator involved in the regulated transcription of nearly all RNA polymerase II-dependent genes. Mediator functions as a bridge to convey information from gene-specific regulatory proteins to the basal RNA polymerase II transcription machinery. Mediator is recruited to promoters by direct interactions with regulatory proteins and serves as a scaffold for the assembly of a functional preinitiation complex with RNA polymerase II and the general transcription factors. This Scheffersomyces stipitis (strain ATCC 58785 / CBS 6054 / NBRC 10063 / NRRL Y-11545) (Yeast) protein is Mediator of RNA polymerase II transcription subunit 6 (MED6).